The sequence spans 77 residues: Oxyopinin-4a (77 aa).

An N-terminal signal peptide occupies residues 1–20 (MKISQVFIFVFLLMISVAWA). Positions 21–47 (NEAYEEESNYLSERFDADVEEITPEFR) are excised as a propeptide. Cysteines 51 and 57 form a disulfide.

As to expression, expressed by the venom gland.

Its subcellular location is the secreted. The protein localises to the target cell membrane. Disrupts cell membranes through the formation of pores. Has antibacterial activity against Gram-positive bacteria S.aureus (MIC=10 uM) and B.subtilis (MIC=0.5 uM) as well as Gram-negative bacteria P.fluorescens (MIC=1 uM) and E.coli (MIC=0.5 uM). Has hemolytic activity against human erythrocytes (EC(50)=7 uM). In Oxyopes takobius (Lynx spider), this protein is Oxyopinin-4a.